The chain runs to 545 residues: CTP synthase (545 aa).

Residues 1-266 (MTTNYIFVTG…DDYICKRFSL (266 aa)) form an amidoligase domain region. Serine 14 is a binding site for CTP. Serine 14 contributes to the UTP binding site. Residues 15–20 (SLGKGI) and aspartate 72 each bind ATP. Residues aspartate 72 and glutamate 140 each coordinate Mg(2+). Residues 147-149 (DIE), 187-192 (KTKPTQ), and lysine 223 contribute to the CTP site. Residues 187–192 (KTKPTQ) and lysine 223 contribute to the UTP site. 239–241 (KDV) contributes to the ATP binding site. One can recognise a Glutamine amidotransferase type-1 domain in the interval 291 to 542 (TIGMVGKYIE…VKAASEHQKR (252 aa)). Residue glycine 352 participates in L-glutamine binding. The active-site Nucleophile; for glutamine hydrolysis is the cysteine 379. L-glutamine-binding positions include 380–383 (LGMQ), glutamate 403, and arginine 470. Active-site residues include histidine 515 and glutamate 517.

This sequence belongs to the CTP synthase family. In terms of assembly, homotetramer.

It catalyses the reaction UTP + L-glutamine + ATP + H2O = CTP + L-glutamate + ADP + phosphate + 2 H(+). The enzyme catalyses L-glutamine + H2O = L-glutamate + NH4(+). The catalysed reaction is UTP + NH4(+) + ATP = CTP + ADP + phosphate + 2 H(+). It participates in pyrimidine metabolism; CTP biosynthesis via de novo pathway; CTP from UDP: step 2/2. Allosterically activated by GTP, when glutamine is the substrate; GTP has no effect on the reaction when ammonia is the substrate. The allosteric effector GTP functions by stabilizing the protein conformation that binds the tetrahedral intermediate(s) formed during glutamine hydrolysis. Inhibited by the product CTP, via allosteric rather than competitive inhibition. In terms of biological role, catalyzes the ATP-dependent amination of UTP to CTP with either L-glutamine or ammonia as the source of nitrogen. Regulates intracellular CTP levels through interactions with the four ribonucleotide triphosphates. The chain is CTP synthase from Salmonella schwarzengrund (strain CVM19633).